The following is a 287-amino-acid chain: Phosphatidylserine decarboxylase proenzyme (287 aa).

Catalysis depends on charge relay system; for autoendoproteolytic cleavage activity residues aspartate 90, histidine 147, and serine 253. Serine 253 acts as the Schiff-base intermediate with substrate; via pyruvic acid; for decarboxylase activity in catalysis. Residue serine 253 is modified to Pyruvic acid (Ser); by autocatalysis.

This sequence belongs to the phosphatidylserine decarboxylase family. PSD-B subfamily. Prokaryotic type I sub-subfamily. In terms of assembly, heterodimer of a large membrane-associated beta subunit and a small pyruvoyl-containing alpha subunit. Pyruvate serves as cofactor. Post-translationally, is synthesized initially as an inactive proenzyme. Formation of the active enzyme involves a self-maturation process in which the active site pyruvoyl group is generated from an internal serine residue via an autocatalytic post-translational modification. Two non-identical subunits are generated from the proenzyme in this reaction, and the pyruvate is formed at the N-terminus of the alpha chain, which is derived from the carboxyl end of the proenzyme. The autoendoproteolytic cleavage occurs by a canonical serine protease mechanism, in which the side chain hydroxyl group of the serine supplies its oxygen atom to form the C-terminus of the beta chain, while the remainder of the serine residue undergoes an oxidative deamination to produce ammonia and the pyruvoyl prosthetic group on the alpha chain. During this reaction, the Ser that is part of the protease active site of the proenzyme becomes the pyruvoyl prosthetic group, which constitutes an essential element of the active site of the mature decarboxylase.

It localises to the cell membrane. It carries out the reaction a 1,2-diacyl-sn-glycero-3-phospho-L-serine + H(+) = a 1,2-diacyl-sn-glycero-3-phosphoethanolamine + CO2. It participates in phospholipid metabolism; phosphatidylethanolamine biosynthesis; phosphatidylethanolamine from CDP-diacylglycerol: step 2/2. Functionally, catalyzes the formation of phosphatidylethanolamine (PtdEtn) from phosphatidylserine (PtdSer). The protein is Phosphatidylserine decarboxylase proenzyme of Aliivibrio fischeri (strain MJ11) (Vibrio fischeri).